The chain runs to 430 residues: Histidinol dehydrogenase (430 aa).

The NAD(+) site is built by tyrosine 124, glutamine 185, and asparagine 208. 3 residues coordinate substrate: serine 233, glutamine 255, and histidine 258. Zn(2+)-binding residues include glutamine 255 and histidine 258. Residues glutamate 324 and histidine 325 each act as proton acceptor in the active site. Histidine 325, aspartate 358, glutamate 412, and histidine 418 together coordinate substrate. Residue aspartate 358 participates in Zn(2+) binding. Residue histidine 418 participates in Zn(2+) binding.

Belongs to the histidinol dehydrogenase family. Zn(2+) is required as a cofactor.

The enzyme catalyses L-histidinol + 2 NAD(+) + H2O = L-histidine + 2 NADH + 3 H(+). Its pathway is amino-acid biosynthesis; L-histidine biosynthesis; L-histidine from 5-phospho-alpha-D-ribose 1-diphosphate: step 9/9. Its function is as follows. Catalyzes the sequential NAD-dependent oxidations of L-histidinol to L-histidinaldehyde and then to L-histidine. The polypeptide is Histidinol dehydrogenase (Leptospira biflexa serovar Patoc (strain Patoc 1 / Ames)).